The primary structure comprises 244 residues: Sperm-egg fusion protein Juno (244 aa).

Positions 1–19 (MAQWWLILLGLWTVLPSLA) are cleaved as a signal peptide. 8 disulfide bridges follow: cysteine 27/cysteine 55, cysteine 47/cysteine 95, cysteine 56/cysteine 99, cysteine 79/cysteine 166, cysteine 86/cysteine 137, cysteine 126/cysteine 200, cysteine 130/cysteine 180, and cysteine 143/cysteine 160. Residues 62–81 (WEAHLDEPLLFNFSMTHCGL) form an important for interaction with IZUMO1 region. Asparagine 73 carries an N-linked (GlcNAc...) asparagine glycan. Residues 223–244 (SASAPQLSYSITAFSLCLLLHA) constitute a propeptide that is removed on maturation.

It belongs to the folate receptor family. As to quaternary structure, monomer. Interacts with IZUMO1; the interaction is direct. IZUMO1 and IZUMO1R/JUNO form a complex with 1:1 stoichiometry. Interacts with FCRL3/MAIA; FCRL3/MAIA replaces IZUMO1R/JUNO as IZUMO1 receptor after sperm-egg adhesion, thereby permitting species-specific gamete fusion. Interacts with WDR54. Post-translationally, the protein is rapidly cleaved following fertilization, being only weakly detectable in zona-intact fertilized eggs at telophase II and undetectable at the pronuclear stage. Sheding is probably required to block to polyspermy and ensuring egg fusion with a single sperm. Expressed in the oocyte (at protein level).

The protein resides in the cell membrane. It localises to the cell projection. It is found in the microvillus membrane. Functionally, receptor for IZUMO1 present at the cell surface of oocytes (oolemma), which is essential for species-specific gamete recognition and fertilization. The IZUMO1:IZUMO1R/JUNO interaction is a necessary adhesion event between sperm and egg that is required for fertilization but is not sufficient for cell fusion. The ligand-receptor interaction probably does not act as a membrane 'fusogen'. Does not bind folate. This Rattus norvegicus (Rat) protein is Sperm-egg fusion protein Juno (Izumo1r).